Consider the following 1363-residue polypeptide: DNA-directed RNA polymerase subunit beta' (1363 aa).

The interval 1–39 (MTSTPSKSRKSSKGSKAAKAAASAPETRPLAKTPPPFRN) is disordered. Positions 14–24 (GSKAAKAAASA) are enriched in low complexity. Zn(2+)-binding residues include Cys-248, Cys-315, Cys-322, and Cys-325.

It belongs to the RNA polymerase beta' chain family. RpoC2 subfamily. In cyanobacteria the RNAP catalytic core is composed of 2 alpha, 1 beta, 1 beta', 1 gamma and 1 omega subunit. When a sigma factor is associated with the core the holoenzyme is formed, which can initiate transcription. Requires Zn(2+) as cofactor.

It catalyses the reaction RNA(n) + a ribonucleoside 5'-triphosphate = RNA(n+1) + diphosphate. In terms of biological role, DNA-dependent RNA polymerase catalyzes the transcription of DNA into RNA using the four ribonucleoside triphosphates as substrates. The chain is DNA-directed RNA polymerase subunit beta' from Synechococcus sp. (strain WH7803).